The following is a 424-amino-acid chain: Glutamyl-tRNA reductase (424 aa).

Substrate is bound by residues 53–56 (TCNR), serine 111, 116–118 (EPQ), and glutamine 122. The Nucleophile role is filled by cysteine 54. Position 191–196 (191–196 (GAGEMI)) interacts with NADP(+).

It belongs to the glutamyl-tRNA reductase family. As to quaternary structure, homodimer.

It catalyses the reaction (S)-4-amino-5-oxopentanoate + tRNA(Glu) + NADP(+) = L-glutamyl-tRNA(Glu) + NADPH + H(+). Its pathway is porphyrin-containing compound metabolism; protoporphyrin-IX biosynthesis; 5-aminolevulinate from L-glutamyl-tRNA(Glu): step 1/2. Functionally, catalyzes the NADPH-dependent reduction of glutamyl-tRNA(Glu) to glutamate 1-semialdehyde (GSA). The chain is Glutamyl-tRNA reductase from Bordetella avium (strain 197N).